Consider the following 116-residue polypeptide: uncharacterized protein (116 aa).

The protein belongs to the BolA/IbaG family.

Its subcellular location is the mitochondrion. This is an uncharacterized protein from Schizosaccharomyces pombe (strain 972 / ATCC 24843) (Fission yeast).